The chain runs to 553 residues: Efflux pump alnA (553 aa).

Residues 1-21 (MSSDDTVKQEHSCSADSEKQD) show a composition bias toward basic and acidic residues. Residues 1 to 36 (MSSDDTVKQEHSCSADSEKQDSSCASDNEQPKEPQS) are disordered. The next 13 helical transmembrane spans lie at 40-60 (IHGL…FLFA), 85-105 (WSGV…LQIF), 110-130 (IKWM…ICGA), 136-156 (MLIG…VGVM), 174-194 (AMGL…GAFT), 202-222 (WSFY…IFLL), 243-263 (LVGT…INFA), 270-290 (SEPG…VFGI), 319-339 (LLFV…YVIP), 355-375 (VRLL…GYLA), 382-402 (IPWY…MYTI), 413-433 (GYSS…HAVA), and 522-542 (TYIL…GMKW).

It belongs to the major facilitator superfamily. TCR/Tet family.

It localises to the cell membrane. Efflux pump; part of the gene cluster that mediates the biosynthesis of asperlin, a polyketide showing anti-inflammatory, antitumor and antibiotic activities. Is probably involved in the efflux of asperlin. The protein is Efflux pump alnA of Emericella nidulans (strain FGSC A4 / ATCC 38163 / CBS 112.46 / NRRL 194 / M139) (Aspergillus nidulans).